Here is a 390-residue protein sequence, read N- to C-terminus: MTTATAIVAGHGLALRRSLPLPNPPGRATTSVSLSARPVTPARRMIVPASPSPRSPRRCRSISSESSTEASAAADIADEEVEAENKVDPQAEVCYLDPDVDPESIREWELDFCSRPILDARGKKVWELVVCDATLSLQFTRYFPNNAINSVTLRDALASVSEALGVPMPDRVRFFRSQMQTIITRACGDLGVKAVPSRRCVSLLLWLEERYEVVYSRHPGFQAGTRPLLALDNPFPTTLPENLFGDKWAFVQLPFSAVREEVESLERRYAFGAGLDLELLGFELDDTTLVPGVAVESSRAKPLAAWMNGLEICAMEADTGRASLILSAGVSTRYVYSGYQKTAASTQEAEAWEAAKKACGGLHFLAIQENLNSDGCVGFWLLLDLPPPPV.

Residues 1 to 69 (MTTATAIVAG…RSISSESSTE (69 aa)) constitute a chloroplast transit peptide. Positions 16–85 (RRSLPLPNPP…IADEEVEAEN (70 aa)) are disordered. Residues 61–75 (SISSESSTEASAAAD) are compositionally biased toward low complexity.

It localises to the plastid. The protein localises to the chloroplast. In terms of biological role, nuclear genome-encoded factor involved in the biogenesis of photosystem I (PSI). Required for the accumulation of PSI during plant development. Does not seem to be required for the translation of mRNAs of the PSI subunits. This chain is Protein TAB2 homolog, chloroplastic, found in Zea mays (Maize).